The primary structure comprises 239 residues: Putative ankyrin repeat protein RBE_0489 (239 aa).

ANK repeat units lie at residues 23–52, 80–109, and 113–143; these read ISSR…SPNA, GIDT…FINA, and FGFT…SLTL.

The polypeptide is Putative ankyrin repeat protein RBE_0489 (Rickettsia bellii (strain RML369-C)).